The primary structure comprises 902 residues: Cytosolic carboxypeptidase 2 (902 aa).

In terms of domain architecture, Peptidase M14 spans 396–666 (YPYTYTDLQC…HVCDTLLDFC (271 aa)). Zn(2+) contacts are provided by His-462, Glu-465, and His-558. The Proton donor/acceptor role is filled by Glu-630. Residues 746-758 (FKKKKKKSLQTRK) show a composition bias toward basic residues. Disordered regions lie at residues 746-770 (FKKK…KNLM) and 796-879 (FKNS…PRSR). Over residues 853–866 (VSCSPKRTINSSQE) the composition is skewed to polar residues.

Belongs to the peptidase M14 family. In terms of assembly, interacts with RARRES1, KIF11 AND MAPRE1. The cofactor is Zn(2+).

The protein localises to the cytoplasm. It is found in the cytosol. Its subcellular location is the cytoskeleton. The protein resides in the microtubule organizing center. It localises to the centrosome. The protein localises to the centriole. It is found in the cilium basal body. It carries out the reaction (L-glutamyl)(n+1)-gamma-L-glutamyl-L-glutamyl-[protein] + H2O = (L-glutamyl)(n)-gamma-L-glutamyl-L-glutamyl-[protein] + L-glutamate. With respect to regulation, inhibited by RARRES1. Metallocarboxypeptidase that mediates deglutamylation of tubulin and non-tubulin target proteins. Catalyzes the removal of polyglutamate side chains present on the gamma-carboxyl group of glutamate residues within the C-terminal tail of tubulin protein. Specifically cleaves tubulin long-side-chains, while it is not able to remove the branching point glutamate. Also catalyzes the removal of polyglutamate residues from the carboxy-terminus of non-tubulin proteins such as MYLK. In Homo sapiens (Human), this protein is Cytosolic carboxypeptidase 2.